A 401-amino-acid chain; its full sequence is Glyceraldehyde-3-phosphate dehydrogenase A, chloroplastic (401 aa).

Residues 1 to 65 (MASNMLSIAN…RSSQNGVVEA (65 aa)) constitute a chloroplast transit peptide. NADP(+)-binding positions include 76–77 (RI), D100, and R145. D-glyceraldehyde 3-phosphate is bound by residues 217–219 (SCT), T248, R263, 276–277 (TG), and R299. Residue C218 is the Nucleophile of the active site. Residue N381 participates in NADP(+) binding.

Belongs to the glyceraldehyde-3-phosphate dehydrogenase family. In terms of assembly, tetramer of either four A chains (GAPDH 2) or two A and two B chains (GAPDH 1).

It is found in the plastid. The protein localises to the chloroplast. It catalyses the reaction D-glyceraldehyde 3-phosphate + phosphate + NADP(+) = (2R)-3-phospho-glyceroyl phosphate + NADPH + H(+). Its pathway is carbohydrate biosynthesis; Calvin cycle. This Spinacia oleracea (Spinach) protein is Glyceraldehyde-3-phosphate dehydrogenase A, chloroplastic (GAPA).